The chain runs to 260 residues: Snake venom serine protease homolog KN7 (260 aa).

An N-terminal signal peptide occupies residues 1 to 18 (MVLIRVLANLLILQLSYA). A propeptide spanning residues 19–24 (QKSSEL) is cleaved from the precursor. One can recognise a Peptidase S1 domain in the interval 25-251 (IIGGDECNIN…HLDWIKSIIA (227 aa)). Disulfide bonds link C31–C165, C52–C68, C100–C258, C144–C212, C176–C191, and C202–C227. Residues N83, N123, and N124 are each glycosylated (N-linked (GlcNAc...) asparagine).

It belongs to the peptidase S1 family. Snake venom subfamily. In terms of tissue distribution, expressed by the venom gland.

The protein resides in the secreted. Its function is as follows. Snake venom serine protease homolog that may act in the hemostasis system of the prey. The sequence is that of Snake venom serine protease homolog KN7 from Trimeresurus stejnegeri (Chinese green tree viper).